Consider the following 90-residue polypeptide: Acylphosphatase (90 aa).

The 86-residue stretch at 5–90 folds into the Acylphosphatase-like domain; the sequence is SFVVHVWGQV…PPQKGGFHTN (86 aa). Residues R20 and N38 contribute to the active site.

It belongs to the acylphosphatase family.

The catalysed reaction is an acyl phosphate + H2O = a carboxylate + phosphate + H(+). This Aeromonas salmonicida (strain A449) protein is Acylphosphatase (acyP).